The sequence spans 663 residues: UvrABC system protein B (663 aa).

In terms of domain architecture, Helicase ATP-binding spans 31-418 (DNIEGGEKAQ…TDTVVEQIIR (388 aa)). Position 44 to 51 (44 to 51 (GATGTGKT)) interacts with ATP. The Beta-hairpin motif lies at 97–120 (YYDYYQPEAYVPSSDTYIEKDSSV). A Helicase C-terminal domain is found at 435–601 (QMDDLLGEIN…TIKKEIRDLI (167 aa)). The UVR domain maps to 627-662 (QAEIKALQKQMQEAAELLDFELAAQIRDVILKLKAI).

The protein belongs to the UvrB family. Forms a heterotetramer with UvrA during the search for lesions. Interacts with UvrC in an incision complex.

The protein resides in the cytoplasm. In terms of biological role, the UvrABC repair system catalyzes the recognition and processing of DNA lesions. A damage recognition complex composed of 2 UvrA and 2 UvrB subunits scans DNA for abnormalities. Upon binding of the UvrA(2)B(2) complex to a putative damaged site, the DNA wraps around one UvrB monomer. DNA wrap is dependent on ATP binding by UvrB and probably causes local melting of the DNA helix, facilitating insertion of UvrB beta-hairpin between the DNA strands. Then UvrB probes one DNA strand for the presence of a lesion. If a lesion is found the UvrA subunits dissociate and the UvrB-DNA preincision complex is formed. This complex is subsequently bound by UvrC and the second UvrB is released. If no lesion is found, the DNA wraps around the other UvrB subunit that will check the other stand for damage. This is UvrABC system protein B from Streptococcus agalactiae serotype Ia (strain ATCC 27591 / A909 / CDC SS700).